Reading from the N-terminus, the 326-residue chain is Metal-binding protein YtgA (326 aa).

A signal peptide spans 1–21; it reads MSFFHTRKYKLILRGLLCLAG. Fe(2+)-binding residues include His75, His141, His207, and Asp299.

Belongs to the bacterial solute-binding protein 9 family. Monomer.

It is found in the periplasm. Functionally, part of the ATP-binding cassette (ABC) transport system YtgABCD involved in metal import. Binds Fe(2+), Mn(2+) and Ni(2+), with a preference for Fe(2+) and delivers them to the membrane permease for translocation into the cytoplasm. In Chlamydia trachomatis serovar D (strain ATCC VR-885 / DSM 19411 / UW-3/Cx), this protein is Metal-binding protein YtgA.